Consider the following 345-residue polypeptide: Protein TRIGALACTOSYLDIACYLGLYCEROL 3, chloroplastic (345 aa).

Residues 1-46 constitute a chloroplast transit peptide; it reads MLSLSCSSSSSSLLPPSLHYHGSSSVQSIVVPRRSLISFRRKVSCC. One can recognise an ABC transporter domain in the interval 85-336; the sequence is IECRDVYKSF…TNPIVQQFAT (252 aa). 117-124 lines the ATP pocket; the sequence is GPSGTGKS.

This sequence belongs to the ABC transporter superfamily. ABCI family. Catalytic subunit of the TGD complex, a lipid translocator at the inner chloroplast envelope membrane made of TGD1, TGD2 and TGD3. Interacts with TGD1 and TGD2 with an overall subunit stoichiometry of 2 TGD1, 2 TGD3 and 8 to 12 TGD2. Interacts with TGD5.

It localises to the plastid. It is found in the chloroplast stroma. Functionally, ATPase transporter involved in lipid transfer from the endoplasmic reticulum (ER) to plastids, and necessary for thylakoids formation. Not involved in transition metal transport pathways. The chain is Protein TRIGALACTOSYLDIACYLGLYCEROL 3, chloroplastic from Arabidopsis thaliana (Mouse-ear cress).